The sequence spans 98 residues: C-X-C motif chemokine 10 (98 aa).

Residues 1 to 21 (MNQTAILICCLVFLTLSGIQG) form the signal peptide. A Citrulline modification is found at Arg26. 2 disulfides stabilise this stretch: Cys30–Cys57 and Cys32–Cys74.

The protein belongs to the intercrine alpha (chemokine CxC) family.

The protein resides in the secreted. Functionally, chemotactic for monocytes and T-lymphocytes. Binds to CXCR3. This chain is C-X-C motif chemokine 10 (CXCL10), found in Macaca nemestrina (Pig-tailed macaque).